The following is a 1069-amino-acid chain: ISWI chromatin-remodeling complex ATPase CHR17 (1069 aa).

A compositionally biased stretch (basic and acidic residues) spans 1-10 (MARASKREVS). Disordered stretches follow at residues 1–93 (MARA…KEMQ) and 136–168 (FAKS…EECL). Acidic residues-rich tracts occupy residues 15–37 (YSSE…DELE) and 45–78 (SDEE…DEEK). A compositionally biased stretch (basic and acidic residues) spans 79–93 (AEISKREKARLKEMQ). Over residues 146–156 (KKGKGRGRHSS) the composition is skewed to basic residues. The Helicase ATP-binding domain occupies 206 to 371 (IRLYENGING…WALLNFLLPE (166 aa)). Residue 219-226 (DEMGLGKT) participates in ATP binding. The short motif at 322 to 325 (DEAH) is the DEAH box element. The Helicase C-terminal domain occupies 499–650 (LLDKLLPKLK…ALVIQQGRLA (152 aa)). 2 SANT domains span residues 845 to 897 (EGFS…VRYK) and 946 to 1007 (QNKG…DTLI). The interval 1016–1069 (EFDERERQARKEKKLSKSATPSKRPSGRQANESPSSLLKKRKQLSMDDYGKRRK) is disordered. A compositionally biased stretch (polar residues) spans 1032–1051 (KSATPSKRPSGRQANESPSS). Positions 1059-1069 (LSMDDYGKRRK) are enriched in basic and acidic residues.

Belongs to the SNF2/RAD54 helicase family. ISWI subfamily. In terms of assembly, interacts with RLT1. Binds to FGT1. Highly expressed in growing tissues such as inflorescence and flower meristems, young leaves and floral organs. Expressed in roots, rosette and cauline leaves, stems, flowers, inflorescences and siliques.

It localises to the nucleus. Possesses intrinsic ATP-dependent nucleosome-remodeling activity. Constitutes the catalytic subunit of several complexes capable of forming ordered nucleosome arrays on chromatin. Involved in the formation of nucleosome distribution patterns. Required for the maintenance of the plant vegetative phase. In association with RLT1 or RLT2 may prevent the early activation of the vegetative-to-reproductive transition by regulating key genes that contribute to flower timing, such as FT, SEP1, SEP3, AGL8/FUL, SOC1 and FLC. Necessary to acquire heat stress (HS) memory. This Arabidopsis thaliana (Mouse-ear cress) protein is ISWI chromatin-remodeling complex ATPase CHR17.